A 531-amino-acid polypeptide reads, in one-letter code: GPI alpha-1,2-mannosyltransferase 3 (531 aa).

The N-linked (GlcNAc...) asparagine glycan is linked to asparagine 84. Transmembrane regions (helical) follow at residues glycine 99 to leucine 119, valine 124 to valine 144, and tyrosine 174 to tyrosine 196. N-linked (GlcNAc...) asparagine glycosylation is present at asparagine 204. The next 6 helical transmembrane spans lie at leucine 210–leucine 230, tyrosine 249–glycine 269, glycine 303–proline 323, isoleucine 328–phenylalanine 348, phenylalanine 350–lysine 370, and alanine 375–histidine 395. 2 N-linked (GlcNAc...) asparagine glycosylation sites follow: asparagine 414 and asparagine 476.

It belongs to the glycosyltransferase 22 family. PIGB subfamily.

It is found in the endoplasmic reticulum membrane. The protein operates within glycolipid biosynthesis; glycosylphosphatidylinositol-anchor biosynthesis. Alpha-1,2-mannosyltransferase that catalyzes the transfer of the third mannose, via an alpha-1,2 bond, from a dolichol-phosphate-mannose (Dol-P-Man) to an alpha-D-Man-(1-&gt;6)-2-PEtn-alpha-D-Man-(1-&gt;4)-alpha-D-GlcN-(1-&gt;6)-(1-radyl,2-acyl-sn-glycero-3-phospho)-2-acyl-inositol intermediate to generate an alpha-D-Man-(1-&gt;2)-alpha-D-Man-(1-&gt;6)-2-PEtn-alpha-D-Man-(1-&gt;4)-alpha-D-GlcN-(1-&gt;6)-(1-radyl,2-acyl-sn-glycero-3-phospho)-2-acyl-inositol (also termed H6) and participates in the nineth step of the glycosylphosphatidylinositol-anchor biosynthesis. May also add the third mannose to an alpha-D-Man-(1-&gt;6)-alpha-D-Man-(1-&gt;4)-alpha-D-GlcN-(1-&gt;6)-(1-radyl,2-acyl-sn-glycero-3-phospho)-2-acyl-inositol (also termed H3) intermediate generating an alpha-D-Man-(1-&gt;2)-alpha-D-Man-(1-&gt;6)-alpha-D-Man-(1-&gt;4)-alpha-D-GlcN-(1-&gt;6)-(1-radyl,2-acyl-sn-glycero-3-phospho)-2-acyl-inositol (also termed H4). The protein is GPI alpha-1,2-mannosyltransferase 3 of Xenopus laevis (African clawed frog).